We begin with the raw amino-acid sequence, 236 residues long: 15,16-dihydrobiliverdin:ferredoxin oxidoreductase (236 aa).

It belongs to the HY2 family.

The catalysed reaction is 15,16-dihydrobiliverdin + oxidized 2[4Fe-4S]-[ferredoxin] = biliverdin IXalpha + reduced 2[4Fe-4S]-[ferredoxin] + 2 H(+). Its function is as follows. Catalyzes the two-electron reduction of biliverdin IX-alpha at the C15 methine bridge. The polypeptide is 15,16-dihydrobiliverdin:ferredoxin oxidoreductase (Prochlorococcus marinus (strain MIT 9312)).